The sequence spans 214 residues: Pyridoxine/pyridoxamine 5'-phosphate oxidase (214 aa).

Substrate contacts are provided by residues 7-10 (REEY) and lysine 65. FMN is bound by residues 60-65 (RTVLLK), 75-76 (FT), arginine 81, lysine 82, and glutamine 104. Substrate-binding residues include tyrosine 122, arginine 126, and serine 130. FMN-binding positions include 139–140 (QS) and tryptophan 184. 190–192 (RLH) is a binding site for substrate. Position 194 (arginine 194) interacts with FMN.

The protein belongs to the pyridoxamine 5'-phosphate oxidase family. As to quaternary structure, homodimer. It depends on FMN as a cofactor.

The enzyme catalyses pyridoxamine 5'-phosphate + O2 + H2O = pyridoxal 5'-phosphate + H2O2 + NH4(+). It carries out the reaction pyridoxine 5'-phosphate + O2 = pyridoxal 5'-phosphate + H2O2. It functions in the pathway cofactor metabolism; pyridoxal 5'-phosphate salvage; pyridoxal 5'-phosphate from pyridoxamine 5'-phosphate: step 1/1. Its pathway is cofactor metabolism; pyridoxal 5'-phosphate salvage; pyridoxal 5'-phosphate from pyridoxine 5'-phosphate: step 1/1. Its function is as follows. Catalyzes the oxidation of either pyridoxine 5'-phosphate (PNP) or pyridoxamine 5'-phosphate (PMP) into pyridoxal 5'-phosphate (PLP). In Crocosphaera subtropica (strain ATCC 51142 / BH68) (Cyanothece sp. (strain ATCC 51142)), this protein is Pyridoxine/pyridoxamine 5'-phosphate oxidase.